The following is a 394-amino-acid chain: 3-dehydroquinate synthase (394 aa).

NAD(+)-binding positions include 112 to 116 (GVIGD), 136 to 137 (TT), lysine 149, lysine 158, and 176 to 179 (TLAT). Glutamate 191, histidine 254, and histidine 276 together coordinate Zn(2+). Polar residues predominate over residues 371 to 388 (STNQHTTYSPHQHATTKP). A disordered region spans residues 371 to 394 (STNQHTTYSPHQHATTKPPNRRPH).

This sequence belongs to the sugar phosphate cyclases superfamily. Dehydroquinate synthase family. The cofactor is NAD(+). Requires Co(2+) as cofactor. It depends on Zn(2+) as a cofactor.

It localises to the cytoplasm. It carries out the reaction 7-phospho-2-dehydro-3-deoxy-D-arabino-heptonate = 3-dehydroquinate + phosphate. It functions in the pathway metabolic intermediate biosynthesis; chorismate biosynthesis; chorismate from D-erythrose 4-phosphate and phosphoenolpyruvate: step 2/7. Catalyzes the conversion of 3-deoxy-D-arabino-heptulosonate 7-phosphate (DAHP) to dehydroquinate (DHQ). This chain is 3-dehydroquinate synthase, found in Xylella fastidiosa (strain 9a5c).